Here is a 310-residue protein sequence, read N- to C-terminus: Low-salt glycan biosynthesis protein Agl12 (310 aa).

Residues 7–13 (GGAGFIG), 32–35 (DALT), and 58–59 (DI) contribute to the NAD(+) site. S82 lines the substrate pocket. T97 serves as a coordination point for NAD(+). Residues T122 and 122 to 124 (TDE) each bind substrate. The Proton donor role is filled by D123. Residues E124 and Y146 each act as proton acceptor in the active site. 146–150 (YSATK) contributes to the NAD(+) binding site. N175 contacts substrate. N176 is a binding site for NAD(+). Residues 185–186 (KL), 201–203 (PVY), R210, N245, and 269–272 (RAGH) each bind substrate.

Belongs to the NAD(P)-dependent epimerase/dehydratase family. dTDP-glucose dehydratase subfamily. The cofactor is NAD(+).

The protein operates within protein modification; protein glycosylation. It participates in cell surface structure biogenesis; S-layer biogenesis. In terms of biological role, lyase involved in N-glycan biosynthetic pathway that takes place under low-salt conditions (1.75 M instead of 3.4 M). Participates in the formation of the tetrasaccharide present at 'Asn-532' of S-layer glycoprotein Csg, consisting of a sulfated hexose, 2 hexoses and rhamnose. Involved in the addition of final rhamnose (sugar 4) of the tetrasaccharide on the dolichol phosphate carrier. This Haloferax volcanii (strain ATCC 29605 / DSM 3757 / JCM 8879 / NBRC 14742 / NCIMB 2012 / VKM B-1768 / DS2) (Halobacterium volcanii) protein is Low-salt glycan biosynthesis protein Agl12 (agl12).